A 138-amino-acid polypeptide reads, in one-letter code: Large ribosomal subunit protein mL43 (138 aa).

The protein belongs to the mitochondrion-specific ribosomal protein mL43 family. In terms of assembly, component of the mitochondrial large ribosomal subunit (mt-LSU). Mature N.crassa 74S mitochondrial ribosomes consist of a small (37S) and a large (54S) subunit. The 37S small subunit contains a 16S ribosomal RNA (16S mt-rRNA) and 32 different proteins. The 54S large subunit contains a 23S rRNA (23S mt-rRNA) and 42 different proteins.

The protein localises to the mitochondrion. Functionally, component of the mitochondrial ribosome (mitoribosome), a dedicated translation machinery responsible for the synthesis of mitochondrial genome-encoded proteins, including at least some of the essential transmembrane subunits of the mitochondrial respiratory chain. The mitoribosomes are attached to the mitochondrial inner membrane and translation products are cotranslationally integrated into the membrane. The chain is Large ribosomal subunit protein mL43 (mrpl51) from Neurospora crassa (strain ATCC 24698 / 74-OR23-1A / CBS 708.71 / DSM 1257 / FGSC 987).